Consider the following 240-residue polypeptide: Ubiquinone biosynthesis O-methyltransferase (240 aa).

R44, G64, D85, and M129 together coordinate S-adenosyl-L-methionine.

This sequence belongs to the methyltransferase superfamily. UbiG/COQ3 family.

It carries out the reaction a 3-demethylubiquinol + S-adenosyl-L-methionine = a ubiquinol + S-adenosyl-L-homocysteine + H(+). The enzyme catalyses a 3-(all-trans-polyprenyl)benzene-1,2-diol + S-adenosyl-L-methionine = a 2-methoxy-6-(all-trans-polyprenyl)phenol + S-adenosyl-L-homocysteine + H(+). It participates in cofactor biosynthesis; ubiquinone biosynthesis. In terms of biological role, O-methyltransferase that catalyzes the 2 O-methylation steps in the ubiquinone biosynthetic pathway. This is Ubiquinone biosynthesis O-methyltransferase from Escherichia coli O157:H7.